A 451-amino-acid chain; its full sequence is uncharacterized protein (451 aa).

Residues 2–60 (NVVLKQRIPLKIKRMGINGEGIGFYKKTLIFVPGALKGEEVFCQISSVRRNFAEAKLLK) enclose the TRAM domain. Positions 73, 79, 82, and 162 each coordinate [4Fe-4S] cluster. The S-adenosyl-L-methionine site is built by Gln-283, Tyr-312, Asp-333, and Asp-381. The Nucleophile role is filled by Cys-408.

The protein belongs to the class I-like SAM-binding methyltransferase superfamily. RNA M5U methyltransferase family.

This is an uncharacterized protein from Streptococcus agalactiae serotype III (strain NEM316).